The following is a 217-amino-acid chain: Uracil-DNA glycosylase (217 aa).

D62 acts as the Proton acceptor in catalysis.

This sequence belongs to the uracil-DNA glycosylase (UDG) superfamily. UNG family.

The protein resides in the cytoplasm. The enzyme catalyses Hydrolyzes single-stranded DNA or mismatched double-stranded DNA and polynucleotides, releasing free uracil.. Excises uracil residues from the DNA which can arise as a result of misincorporation of dUMP residues by DNA polymerase or due to deamination of cytosine. The sequence is that of Uracil-DNA glycosylase from Streptococcus pyogenes serotype M1.